The following is a 478-amino-acid chain: NAD-dependent malic enzyme (478 aa).

The ACT domain occupies 12–86; the sequence is TIRLQFEKDI…GVKIVNVSDR (75 aa). Residue tyrosine 114 is the Proton donor of the active site. Catalysis depends on lysine 169, which acts as the Proton acceptor. Positions 211, 212, and 237 each coordinate a divalent metal cation. NAD(+) is bound by residues 270-273, asparagine 363, and asparagine 393; that span reads IGAA.

The protein belongs to the malic enzymes family. As to quaternary structure, homotetramer. The cofactor is Mg(2+). Mn(2+) is required as a cofactor.

It carries out the reaction (S)-malate + NAD(+) = pyruvate + CO2 + NADH. The catalysed reaction is oxaloacetate + H(+) = pyruvate + CO2. The activity is enhanced 5-7 times by ammonium and potassium. Functionally, in addition to the NAD-dependent oxidative decarboxylation of L-malate, the enzyme catalyzes the decarboxylation of oxaloacetate. This is NAD-dependent malic enzyme from Geobacillus stearothermophilus (Bacillus stearothermophilus).